The chain runs to 541 residues: 1'-carboxy-chondrochloren decarboxylase (541 aa).

Residues 39-226 enclose the FAD-binding PCMH-type domain; sequence TTHRIPAIIS…TRMTIWLAPR (188 aa).

It carries out the reaction 1'-carboxy-chondrochloren A + FAD + 2 H(+) = chondrochloren A + FADH2 + CO2. It catalyses the reaction 1'-carboxy-chondrochloren B + FAD + 2 H(+) = chondrochloren B + FADH2 + CO2. The protein operates within antibiotic biosynthesis. Its activity is regulated as follows. Activity is not affected by the addition of EDTA or/and EGTA chelators or in the presence of external metals like Zn(2+), Mg(2+), Mn(2+) and Fe(2+). Activity is inhibited under low oxygen conditions. Oxidative decarboxylase involved in the biosynthesis of the antibiotics chondrochloren A and chondrochloren B. Catalyzes the decarboxylation of biologically inactive pre-chondrochloren A and pre-chondrochloren B to yield mature chondrochloren A and chondrochloren B, respectively. Cannot decarboxylate free L-tyrosine, 3-chloro-tyrosine or a number of chlorinated and non-chlorinated analog substrates containing variable N-acyl chains. This chain is 1'-carboxy-chondrochloren decarboxylase, found in Chondromyces crocatus.